The chain runs to 169 residues: Neurotensin/neuromedin N (169 aa).

Positions 1 to 22 (MIGMNLQLVCLTLLAFSSWSLC) are cleaved as a signal peptide.

This sequence belongs to the neurotensin family. Interacts with NTSR1. Interacts with SORT1. Interacts with SORL1. In terms of processing, neurotensin is cleaved and degraded by Angiotensin-converting enzyme (ACE) and neprilysin (MME).

It localises to the secreted. The protein localises to the cytoplasmic vesicle. Its subcellular location is the secretory vesicle. Functionally, neurotensin may play an endocrine or paracrine role in the regulation of fat metabolism. It causes contraction of smooth muscle. The sequence is that of Neurotensin/neuromedin N (Nts) from Rattus norvegicus (Rat).